Reading from the N-terminus, the 298-residue chain is Acetylglutamate kinase (298 aa).

Substrate-binding positions include 69-70 (GG), arginine 91, and asparagine 196.

Belongs to the acetylglutamate kinase family. ArgB subfamily.

The protein resides in the cytoplasm. It carries out the reaction N-acetyl-L-glutamate + ATP = N-acetyl-L-glutamyl 5-phosphate + ADP. The protein operates within amino-acid biosynthesis; L-arginine biosynthesis; N(2)-acetyl-L-ornithine from L-glutamate: step 2/4. Catalyzes the ATP-dependent phosphorylation of N-acetyl-L-glutamate. The sequence is that of Acetylglutamate kinase from Rhodopseudomonas palustris (strain ATCC BAA-98 / CGA009).